A 251-amino-acid chain; its full sequence is Squamosa promoter-binding-like protein 4 (251 aa).

Over residues 1–15 (MDWMPPPKPTSPRSP) the composition is skewed to pro residues. The tract at residues 1–64 (MDWMPPPKPT…RAEEGGGGGG (64 aa)) is disordered. The segment covering 24–43 (AAVPGSSSGEVSAAAAAAAA) has biased composition (low complexity). The SBP-type zinc-finger motif lies at 65–142 (EVRCQVEGCG…YDHNARRRKP (78 aa)). Positions 68, 73, 90, 93, 109, 112, 116, and 128 each coordinate Zn(2+). The Bipartite nuclear localization signal signature appears at 125-141 (KRSCRRRLYDHNARRRK).

Expressed in stems, leaf sheaths, and young panicles.

It localises to the nucleus. Functionally, trans-acting factor that binds specifically to the consensus nucleotide sequence 5'-TNCGTACAA-3'. May be involved in panicle development. This Oryza sativa subsp. japonica (Rice) protein is Squamosa promoter-binding-like protein 4 (SPL4).